Reading from the N-terminus, the 191-residue chain is Calcium-binding protein L (191 aa).

Glycine 2 is lipidated: N-myristoyl glycine. EF-hand domains are found at residues 25-59, 60-95, and 96-131; these read EQVSQILKDYQSVNQDSKGLSLEEFKSFFSIRFKD, YDDASILHMFKIFDSDKNGRISFKEFVGALFIITKS, and PVSDKLSFLFDMFDRDLNGYLDLEESYNILKLALNT. Residues aspartate 73, aspartate 75, asparagine 77, arginine 79, and glutamate 84 each coordinate Ca(2+).

The protein belongs to the recoverin family.

This is Calcium-binding protein L (cbpL) from Dictyostelium discoideum (Social amoeba).